Here is a 192-residue protein sequence, read N- to C-terminus: Cytochrome c oxidase assembly protein CtaG (192 aa).

At 1–9 (MSLSPHQKT) the chain is on the cytoplasmic side. A helical; Signal-anchor for type II membrane protein transmembrane segment spans residues 10 to 30 (AGWLVGVVVVMGAASFAAVPF). Residues 31 to 192 (YDWFCRVTGF…AARPAGIDVN (162 aa)) lie on the Periplasmic side of the membrane.

Belongs to the COX11/CtaG family.

The protein resides in the cell inner membrane. Its function is as follows. Exerts its effect at some terminal stage of cytochrome c oxidase synthesis, probably by being involved in the insertion of the copper B into subunit I. This is Cytochrome c oxidase assembly protein CtaG from Cereibacter sphaeroides (strain ATCC 17025 / ATH 2.4.3) (Rhodobacter sphaeroides).